The primary structure comprises 204 residues: Small ribosomal subunit protein uS4 (204 aa).

Positions 92–157 (RRLDALVLRS…KPLFEVAREG (66 aa)) constitute an S4 RNA-binding domain.

The protein belongs to the universal ribosomal protein uS4 family. As to quaternary structure, part of the 30S ribosomal subunit. Contacts protein S5. The interaction surface between S4 and S5 is involved in control of translational fidelity.

In terms of biological role, one of the primary rRNA binding proteins, it binds directly to 16S rRNA where it nucleates assembly of the body of the 30S subunit. Its function is as follows. With S5 and S12 plays an important role in translational accuracy. The polypeptide is Small ribosomal subunit protein uS4 (Streptomyces avermitilis (strain ATCC 31267 / DSM 46492 / JCM 5070 / NBRC 14893 / NCIMB 12804 / NRRL 8165 / MA-4680)).